We begin with the raw amino-acid sequence, 125 residues long: Large ribosomal subunit protein uL22c (125 aa).

Belongs to the universal ribosomal protein uL22 family. As to quaternary structure, part of the 50S ribosomal subunit.

It localises to the plastid. The protein resides in the chloroplast. Functionally, this protein binds specifically to 23S rRNA. Its function is as follows. The globular domain of the protein is located near the polypeptide exit tunnel on the outside of the subunit, while an extended beta-hairpin is found that lines the wall of the exit tunnel in the center of the 70S ribosome. This is Large ribosomal subunit protein uL22c (rpl22) from Nuphar advena (Common spatterdock).